Reading from the N-terminus, the 590-residue chain is Muscarinic acetylcholine receptor M3 (590 aa).

At 1-67 the chain is on the extracellular side; it reads MTLHNNSTTS…DPLGGHTVWQ (67 aa). Asparagine 5, asparagine 6, asparagine 15, asparagine 41, and asparagine 48 each carry an N-linked (GlcNAc...) asparagine glycan. The chain crosses the membrane as a helical span at residues 68–91; it reads VVFIAFLTGILALVTIIGNILVIV. The Cytoplasmic portion of the chain corresponds to 92 to 104; it reads SFKVNKQLKTVNN. A helical transmembrane segment spans residues 105-130; the sequence is YFLLSLACADLIIGVISMNLFTTYII. The Extracellular portion of the chain corresponds to 131–142; that stretch reads MNRWALGNLACD. Cysteine 141 and cysteine 221 are oxidised to a cystine. Residues 143 to 164 form a helical membrane-spanning segment; that stretch reads LWLAIDYVASNASVMNLLVISF. Topologically, residues 165–184 are cytoplasmic; the sequence is DRYFSITRPLTYRAKRTTKR. The chain crosses the membrane as a helical span at residues 185–206; sequence AGVMIGLAWVISFVLWAPAILF. The Extracellular portion of the chain corresponds to 207–229; that stretch reads WQYFVGKRTVPPGECFIQFLSEP. A helical membrane pass occupies residues 230-252; sequence TITFGTAIAAFYMPVTIMTILYW. Topologically, residues 253–491 are cytoplasmic; that stretch reads RIYKETEKRT…SLVKEKKAAQ (239 aa). Residues 275–281 carry the Basolateral sorting signal motif; it reads AETENFV. The tract at residues 323–357 is disordered; it reads SSEQMDQDHSSSDSWNNNDAAASLENSASSDEEDI. Residues 334-345 show a composition bias toward low complexity; sequence SDSWNNNDAAAS. Serine 385 carries the phosphoserine modification. Residues 492–514 traverse the membrane as a helical segment; it reads TLSAILLAFIITWTPYNIMVLVN. The Extracellular portion of the chain corresponds to 515–526; the sequence is TFCDSCIPKTFW. Cysteines 517 and 520 form a disulfide. A helical transmembrane segment spans residues 527 to 546; the sequence is NLGYWLCYINSTVNPVCYAL. Residues 547–590 lie on the Cytoplasmic side of the membrane; that stretch reads CNKTFRTTFKMLLLCQCGKKKRRKQQYQQRQSVIFHKRAPEQAL.

It belongs to the G-protein coupled receptor 1 family. Muscarinic acetylcholine receptor subfamily. CHRM3 sub-subfamily. Homodimer; the dimers can form tetramers. Interacts with NALCN. Interacts with TMEM147.

It localises to the cell membrane. Its subcellular location is the postsynaptic cell membrane. The protein localises to the basolateral cell membrane. It is found in the endoplasmic reticulum membrane. The muscarinic acetylcholine receptor mediates various cellular responses, including inhibition of adenylate cyclase, breakdown of phosphoinositides and modulation of potassium channels through the action of G proteins. Primary transducing effect is Pi turnover. The protein is Muscarinic acetylcholine receptor M3 (CHRM3) of Gorilla gorilla gorilla (Western lowland gorilla).